A 420-amino-acid chain; its full sequence is MQNLLEALVSRSLVHDQTPGLQARLAQGPITGYVGFDPTADSLHVGHLLAVMSLAWLQRCGGTPIIVVGGGTGMVGDPSGKRSERPVLSVEEIDRNVAAIRAQLERFVSFEGQNAARVRNNADWLRAIGLMEFLRDVGKHFTVNYMLAKDSVKGRMESGISFTEFSYQLIQAYDFWHLFRSEKCELQMGGSDQWGNITAGAELVSRKDGASVHGLTFPLLTTASGTKFGKTEGGAVWLDPARTSPYKFFQFWLNTDDRDVERLLKFFTFLSVEEIAALLAEQARDPGKRPAQRRLAEDVTARVHGPDVTRSVVEASRILFGGTDLRAASADVLEVLAGEIPSATVTGDELAALTVADLLVKVGLAASKGEVRRGVAGRGFSLNGAVLESGDAKVAAGDLLAGGYALLQKGKRNYALVKVR.

Tyr-33 provides a ligand contact to L-tyrosine. A 'HIGH' region motif is present at residues 38-47 (PTADSLHVGH). L-tyrosine-binding residues include Tyr-167 and Gln-171. The 'KMSKS' region motif lies at 227–231 (KFGKT). Lys-230 is a binding site for ATP. The 67-residue stretch at 353–419 (LTVADLLVKV…GKRNYALVKV (67 aa)) folds into the S4 RNA-binding domain.

The protein belongs to the class-I aminoacyl-tRNA synthetase family. TyrS type 1 subfamily. Homodimer.

It localises to the cytoplasm. It carries out the reaction tRNA(Tyr) + L-tyrosine + ATP = L-tyrosyl-tRNA(Tyr) + AMP + diphosphate + H(+). Functionally, catalyzes the attachment of tyrosine to tRNA(Tyr) in a two-step reaction: tyrosine is first activated by ATP to form Tyr-AMP and then transferred to the acceptor end of tRNA(Tyr). In Anaeromyxobacter dehalogenans (strain 2CP-1 / ATCC BAA-258), this protein is Tyrosine--tRNA ligase.